Consider the following 590-residue polypeptide: Cationic amino acid transporter 8, vacuolar (590 aa).

At 1 to 85 the chain is on the cytoplasmic side; the sequence is MIPASMEEAH…ESENPMRRCL (85 aa). Residues 86 to 106 traverse the membrane as a helical segment; that stretch reads TWWDLLWLSFGSVVGSGVFVI. Over 107 to 114 the chain is Vacuolar; sequence TGQEARVG. The chain crosses the membrane as a helical span at residues 115–135; that stretch reads AGPAVVLSYAISGVSALLSVL. Residues 136–160 lie on the Cytoplasmic side of the membrane; the sequence is CYAEFGVEIPVAGGSFSYLRVELGD. A helical membrane pass occupies residues 161–181; it reads FIAFIAAGNILLEAMVGAAGL. Residues 182-209 lie on the Vacuolar side of the membrane; it reads GRSWSSYLASLVKNDSDYFRIKVDSFAK. Asparagine 195 is a glycosylation site (N-linked (GlcNAc...) asparagine). A helical transmembrane segment spans residues 210–230; that stretch reads GFDLLDPVAVAVLLVANGIAM. Residues 231-238 are Cytoplasmic-facing; sequence TGTKRTSW. Residues 239–259 form a helical membrane-spanning segment; that stretch reads LNLITSMVTVCIIVFIVVVGF. The Vacuolar segment spans residues 260 to 266; that stretch reads THSKTSN. Residues 267–287 form a helical membrane-spanning segment; it reads LVPFFPYGAKGVVQSAAVVYW. At 288 to 310 the chain is on the cytoplasmic side; that stretch reads SYTGFDMVANMAEETEKPSRDIP. A helical transmembrane segment spans residues 311 to 331; the sequence is IGLVGSMSMITVVYCLMALAL. Residues 332–359 are Vacuolar-facing; sequence TMMVKYTEIDANAAYSVAFAQIGMKWAK. A helical membrane pass occupies residues 360 to 380; the sequence is YLVGICALKGMTTSLLVGSLG. The Cytoplasmic segment spans residues 381-407; the sequence is QARYTTQIARSHMIPPWFALVHPKTGT. Residues 408-428 traverse the membrane as a helical segment; that stretch reads PIYATLLVTILSSIISFFTSL. Residue glutamate 429 is a topological domain, vacuolar. A helical transmembrane segment spans residues 430-450; the sequence is VLSSVFSFATLFIFMLVAVAL. Over 451–465 the chain is Cytoplasmic; the sequence is LVRRYYVKDVTPEAG. A helical membrane pass occupies residues 466–486; that stretch reads LLKFLGFLFLIIASSIGVSAL. Residues 487 to 493 lie on the Vacuolar side of the membrane; it reads WNSGVKG. The helical transmembrane segment at 494-514 threads the bilayer; the sequence is WIAYTVTGVIWFIGTLGLALL. Residues 515–522 are Cytoplasmic-facing; the sequence is PKYRVPKV. A helical membrane pass occupies residues 523-543; sequence WGVPLVPWLPSFSIAMNLFLI. The Vacuolar portion of the chain corresponds to 544–553; that stretch reads GSLGYVAFLR. Residues 554-574 form a helical membrane-spanning segment; that stretch reads FIICTMVMLLYYLFVGLHATY. Residues 575-590 lie on the Cytoplasmic side of the membrane; it reads DVAHQPLEEAKFEGER.

It belongs to the amino acid-polyamine-organocation (APC) superfamily. Cationic amino acid transporter (CAT) (TC 2.A.3.3) family. As to expression, expressed in roots, stems, flowers and leaves. Mostly present in young and rapidly dividing tissues such as the shoot and root apical meristem, and in young leaves and petioles during seedling development.

The protein resides in the cell membrane. Its function is as follows. Permease involved in the transport of the cationic neutral or acidic amino acids. This chain is Cationic amino acid transporter 8, vacuolar (CAT8), found in Arabidopsis thaliana (Mouse-ear cress).